The chain runs to 940 residues: Lysine-specific demethylase 7A (940 aa).

The segment at 37 to 88 adopts a PHD-type zinc-finger fold; the sequence is PVYCVCRQPYDVNRFMIECDVCKDWFHGSCVGVEEHHAVDIDLYHCPDCAAL. Positions 97–114 are linker; that stretch reads RRNWHRHDYTEVDDGSKP. A JmjC domain is found at 230-386; it reads FSDTKMSELV…MQLRCYEMEK (157 aa). Thr-279 provides a ligand contact to substrate. Residues His-282 and Asp-284 each contribute to the Fe cation site. Lys-299 contributes to the substrate binding site. His-354 is a binding site for Fe cation. Disordered stretches follow at residues 483 to 509, 599 to 670, 710 to 729, 818 to 854, and 876 to 920; these read VKSQ…HSRR, LYTA…PDCT, SQKP…TSTS, NAQD…SSSI, and SPER…MATA. Ser-604 is modified (phosphoserine). Residues 613–623 are compositionally biased toward polar residues; that stretch reads TQNANMKTEQS. A compositionally biased stretch (basic and acidic residues) spans 714 to 724; it reads SRQEIPVKREC.

This sequence belongs to the JHDM1 histone demethylase family. JHDM1D subfamily. Fe(2+) serves as cofactor.

The protein localises to the nucleus. It carries out the reaction N(6),N(6)-dimethyl-L-lysyl(9)-[histone H3] + 2 2-oxoglutarate + 2 O2 = L-lysyl(9)-[histone H3] + 2 formaldehyde + 2 succinate + 2 CO2. It catalyses the reaction N(6),N(6)-dimethyl-L-lysyl(27)-[histone H3] + 2 2-oxoglutarate + 2 O2 = L-lysyl(27)-[histone H3] + 2 formaldehyde + 2 succinate + 2 CO2. The enzyme catalyses N(6),N(6)-dimethyl-L-lysyl(36)-[histone H3] + 2-oxoglutarate + O2 = N(6)-methyl-L-lysyl(36)-[histone H3] + formaldehyde + succinate + CO2. The catalysed reaction is N(6)-methyl-L-lysyl(20)-[histone H4] + 2-oxoglutarate + O2 = L-lysyl(20)-[histone H4] + formaldehyde + succinate + CO2. Histone demethylase required for brain development. Specifically demethylates dimethylated 'Lys-9', 'Lys-27' and 'Lys-36' (H3K9me2, H3K27me2, H3K36me2, respectively) of histone H3 and monomethylated histone H4 'Lys-20' residue (H4K20Me1), thereby playing a central role in histone code. Specifically binds trimethylated 'Lys-4' of histone H3 (H3K4me3), affecting histone demethylase specificity: in presence of H3K4me3, it has no demethylase activity toward H3K9me2, while it has high activity toward H3K27me2. Demethylates H3K9me2 in absence of H3K4me3. Has activity toward H4K20Me1 only when nucleosome is used as a substrate and when not histone octamer is used as substrate. This is Lysine-specific demethylase 7A (Kdm7a) from Mus musculus (Mouse).